Consider the following 799-residue polypeptide: Lon protease (799 aa).

Residues 7-200 enclose the Lon N-terminal domain; sequence LPVLPLRDIV…KVFALMEGEI (194 aa). 352–359 is a binding site for ATP; it reads GPPGVGKT. In terms of domain architecture, Lon proteolytic spans 587–768; sequence VDQVGIVTGL…DEVLKHALTG (182 aa). Catalysis depends on residues Ser-674 and Lys-717. A disordered region spans residues 772–799; that stretch reads PVEWNEAEEPITTSAKKDDGDSDAMLTH.

Belongs to the peptidase S16 family. Homohexamer. Organized in a ring with a central cavity.

It localises to the cytoplasm. The enzyme catalyses Hydrolysis of proteins in presence of ATP.. Functionally, ATP-dependent serine protease that mediates the selective degradation of mutant and abnormal proteins as well as certain short-lived regulatory proteins. Required for cellular homeostasis and for survival from DNA damage and developmental changes induced by stress. Degrades polypeptides processively to yield small peptide fragments that are 5 to 10 amino acids long. Binds to DNA in a double-stranded, site-specific manner. CcrM is an important target of the Lon protease pathway in C.crescentus. The sequence is that of Lon protease from Caulobacter vibrioides (strain ATCC 19089 / CIP 103742 / CB 15) (Caulobacter crescentus).